The following is a 333-amino-acid chain: Fructose-1,6-bisphosphatase class 1 1 (333 aa).

Residues Glu-81, Asp-100, Leu-102, and Asp-103 each contribute to the Mg(2+) site. Residues 103 to 106 (DGSS) and Asn-191 contribute to the substrate site. Glu-263 serves as a coordination point for Mg(2+).

It belongs to the FBPase class 1 family. Homotetramer. Requires Mg(2+) as cofactor.

It localises to the cytoplasm. It catalyses the reaction beta-D-fructose 1,6-bisphosphate + H2O = beta-D-fructose 6-phosphate + phosphate. It participates in carbohydrate biosynthesis; Calvin cycle. This Cereibacter sphaeroides (strain ATCC 17025 / ATH 2.4.3) (Rhodobacter sphaeroides) protein is Fructose-1,6-bisphosphatase class 1 1.